The primary structure comprises 336 residues: Ribosomal RNA small subunit methyltransferase C (336 aa).

This sequence belongs to the methyltransferase superfamily. RsmC family. As to quaternary structure, monomer.

The protein resides in the cytoplasm. The enzyme catalyses guanosine(1207) in 16S rRNA + S-adenosyl-L-methionine = N(2)-methylguanosine(1207) in 16S rRNA + S-adenosyl-L-homocysteine + H(+). Functionally, specifically methylates the guanine in position 1207 of 16S rRNA in the 30S particle. The sequence is that of Ribosomal RNA small subunit methyltransferase C from Hamiltonella defensa subsp. Acyrthosiphon pisum (strain 5AT).